The sequence spans 634 residues: 1-deoxy-D-xylulose-5-phosphate synthase (634 aa).

Thiamine diphosphate is bound by residues histidine 79 and 120–122; that span reads GHA. A Mg(2+)-binding site is contributed by aspartate 151. Residues 152-153, asparagine 180, tyrosine 292, and glutamate 376 each bind thiamine diphosphate; that span reads GS. Mg(2+) is bound at residue asparagine 180.

The protein belongs to the transketolase family. DXPS subfamily. As to quaternary structure, homodimer. Mg(2+) is required as a cofactor. Requires thiamine diphosphate as cofactor.

It carries out the reaction D-glyceraldehyde 3-phosphate + pyruvate + H(+) = 1-deoxy-D-xylulose 5-phosphate + CO2. Its pathway is metabolic intermediate biosynthesis; 1-deoxy-D-xylulose 5-phosphate biosynthesis; 1-deoxy-D-xylulose 5-phosphate from D-glyceraldehyde 3-phosphate and pyruvate: step 1/1. Catalyzes the acyloin condensation reaction between C atoms 2 and 3 of pyruvate and glyceraldehyde 3-phosphate to yield 1-deoxy-D-xylulose-5-phosphate (DXP). This chain is 1-deoxy-D-xylulose-5-phosphate synthase, found in Porphyromonas gingivalis (strain ATCC BAA-308 / W83).